Here is a 274-residue protein sequence, read N- to C-terminus: Isoprenyl transferase (274 aa).

The active site involves Asp-49. Mg(2+) is bound at residue Asp-49. Substrate contacts are provided by residues 50 to 53, Phe-54, Arg-62, His-66, and 94 to 96; these read GNRR and STD. Asn-97 (proton acceptor) is an active-site residue. Residues Arg-100, Arg-223, and 229-231 each bind substrate; that span reads RLS. Residue Glu-242 coordinates Mg(2+).

This sequence belongs to the UPP synthase family. Homodimer. Mg(2+) is required as a cofactor.

Functionally, catalyzes the condensation of isopentenyl diphosphate (IPP) with allylic pyrophosphates generating different type of terpenoids. In Deinococcus radiodurans (strain ATCC 13939 / DSM 20539 / JCM 16871 / CCUG 27074 / LMG 4051 / NBRC 15346 / NCIMB 9279 / VKM B-1422 / R1), this protein is Isoprenyl transferase.